Consider the following 242-residue polypeptide: Platelet-derived growth factor subunit B (242 aa).

The first 20 residues, 1–20, serve as a signal peptide directing secretion; that stretch reads MNRCWALFLSLCCYLRLVSA. A propeptide spans 21–81 (removed in mature form); the sequence is EGDPIPEELY…ELESLSRGRR (61 aa). N63 is a glycosylation site (N-linked (GlcNAc...) asparagine). Disulfide bonds link C97–C141, C130–C178, and C134–C180. Residues 219 to 232 show a composition bias toward basic residues; that stretch reads PPKGKHRKFKHTHD. The disordered stretch occupies residues 219–242; it reads PPKGKHRKFKHTHDKKALKETLGA. A compositionally biased stretch (basic and acidic residues) spans 233–242; sequence KKALKETLGA.

Belongs to the PDGF/VEGF growth factor family. Antiparallel homodimer; disulfide-linked. Antiparallel heterodimer with PDGFA; disulfide-linked. The PDGFB homodimer interacts with PDGFRA and PDGFRB homodimers, and with heterodimers formed by PDGFRA and PDGFRB. The heterodimer composed of PDGFA and PDGFB interacts with PDGFRB homodimers, and with heterodimers formed by PDGFRA and PDGFRB. Interacts with XLKD1. Interacts with LRP1. Interacts with SORL1 (via the N-terminal ectodomain). Interacts with CD82; this interaction inhibits PDGFB-mediated signaling pathway.

Its subcellular location is the secreted. Functionally, growth factor that plays an essential role in the regulation of embryonic development, cell proliferation, cell migration, survival and chemotaxis. Potent mitogen for cells of mesenchymal origin. Required for normal proliferation and recruitment of pericytes and vascular smooth muscle cells in the central nervous system, skin, lung, heart and placenta. Required for normal blood vessel development, and for normal development of kidney glomeruli. Plays an important role in wound healing. Signaling is modulated by the formation of heterodimers with PDGFA. The chain is Platelet-derived growth factor subunit B (PDGFB) from Canis lupus familiaris (Dog).